Consider the following 238-residue polypeptide: Ribosomal RNA small subunit methyltransferase G (238 aa).

S-adenosyl-L-methionine-binding positions include Gly-77, Phe-82, 128–129, and Arg-147; that span reads AE.

This sequence belongs to the methyltransferase superfamily. RNA methyltransferase RsmG family.

The protein localises to the cytoplasm. Functionally, specifically methylates the N7 position of guanine in position 535 of 16S rRNA. The protein is Ribosomal RNA small subunit methyltransferase G of Listeria monocytogenes serotype 4b (strain F2365).